The primary structure comprises 160 residues: Transcription elongation factor GreA (160 aa).

A coiled-coil region spans residues 1-72; the sequence is MAEKTYPMTL…QISSLETKIR (72 aa).

Belongs to the GreA/GreB family.

Functionally, necessary for efficient RNA polymerase transcription elongation past template-encoded arresting sites. The arresting sites in DNA have the property of trapping a certain fraction of elongating RNA polymerases that pass through, resulting in locked ternary complexes. Cleavage of the nascent transcript by cleavage factors such as GreA or GreB allows the resumption of elongation from the new 3'terminus. GreA releases sequences of 2 to 3 nucleotides. This chain is Transcription elongation factor GreA, found in Streptococcus gordonii (strain Challis / ATCC 35105 / BCRC 15272 / CH1 / DL1 / V288).